The chain runs to 707 residues: Signal transducer and activator of transcription A (707 aa).

The span at Leu70–Asn89 shows a compositional bias: polar residues. A disordered region spans residues Leu70–Pro246. The segment covering Gln90–Gln111 has biased composition (low complexity). A compositionally biased stretch (polar residues) spans Thr112–Met121. Over residues Gln142 to Asn238 the composition is skewed to low complexity. The stretch at Ser242–Ser356 forms a coiled coil. Residues Lys443–Gln487 mediate DNA binding. The SH2 domain maps to Trp583–Leu686. Tyr702 bears the Phosphotyrosine mark.

Belongs to the transcription factor STAT family. As to quaternary structure, monomer, in the absence of tyrosine phosphorylation. Homodimer, or heterodimer with another family member, when tyrosine phosphorylated. Post-translationally, tyrosine phosphorylated in response to cAMP. Not tyrosine phosphorylated in growing cells. Tyrosine phosphorylation is first detected at the tight mound stage, continues throughout the slug stage and early culmination, and starts to decrease at mid-culmination. Barely detectable in fruiting bodies.

The protein localises to the cytoplasm. The protein resides in the nucleus. Functionally, transcription factor that binds to 5'-TTGAATTGA-3' elements in the promoter region of target genes. Functions as a repressor of the ecmB gene. Regulates the differentiation of prestalk cells during development. This chain is Signal transducer and activator of transcription A (dstA), found in Dictyostelium discoideum (Social amoeba).